The sequence spans 1235 residues: Phosphorylase b kinase regulatory subunit alpha, liver isoform (1235 aa).

S697, S731, and S737 each carry phosphoserine. The calmodulin-binding stretch occupies residues 808–838 (LSELYGKAGLNQEWGLIRYISGLLRKKVEVL). A compositionally biased stretch (low complexity) spans 976 to 986 (SSASSPAISIH). The interval 976–1002 (SSASSPAISIHEVGHTGVTKTERSGIN) is disordered. Phosphoserine is present on residues S984, S1016, and S1044. The span at 1032–1053 (AYSKSVRSSTPSSPTGTSSSDS) shows a compositional bias: low complexity. The disordered stretch occupies residues 1032 to 1060 (AYSKSVRSSTPSSPTGTSSSDSGGHHISW). Residues 1059–1099 (SWGERQGQWLRRRRLDGAINRVPVGFYQRVWKILQKCHGLS) form a calmodulin-binding region. A lipid anchor (S-farnesyl cysteine) is attached at C1232.

The protein belongs to the phosphorylase b kinase regulatory chain family. In terms of assembly, hexadecamer of 4 heterotetramers, each composed of alpha, beta, gamma, and delta subunits. Alpha (PHKA1 or PHKA2) and beta (PHKB) are regulatory subunits, gamma (PHKG1 or PHKG2) is the catalytic subunit, and delta is calmodulin. In terms of processing, although the final Cys may be farnesylated, the terminal tripeptide is probably not removed, and the C-terminus is not methylated. As to expression, predominantly expressed in liver and other non-muscle tissues.

Its subcellular location is the cell membrane. The protein operates within glycan biosynthesis; glycogen metabolism. With respect to regulation, by phosphorylation of various serine residues and by calcium. Functionally, phosphorylase b kinase catalyzes the phosphorylation of serine in certain substrates, including troponin I. The alpha chain may bind calmodulin. In Oryctolagus cuniculus (Rabbit), this protein is Phosphorylase b kinase regulatory subunit alpha, liver isoform (PHKA2).